Here is a 506-residue protein sequence, read N- to C-terminus: Lysine--tRNA ligase (506 aa).

Positions 416 and 423 each coordinate Mg(2+).

It belongs to the class-II aminoacyl-tRNA synthetase family. Homodimer. The cofactor is Mg(2+).

It is found in the cytoplasm. It catalyses the reaction tRNA(Lys) + L-lysine + ATP = L-lysyl-tRNA(Lys) + AMP + diphosphate. This Baumannia cicadellinicola subsp. Homalodisca coagulata protein is Lysine--tRNA ligase.